The chain runs to 494 residues: Glutamate decarboxylase 5 (494 aa).

K276 carries the N6-(pyridoxal phosphate)lysine modification.

Belongs to the group II decarboxylase family. Homohexamer. Interacts with calmodulin. Requires pyridoxal 5'-phosphate as cofactor. As to expression, expressed in flowers.

It carries out the reaction L-glutamate + H(+) = 4-aminobutanoate + CO2. Its function is as follows. Catalyzes the production of GABA. The calmodulin-binding is calcium-dependent and it is proposed that this may, directly or indirectly, form a calcium regulated control of GABA biosynthesis. This is Glutamate decarboxylase 5 (GAD5) from Arabidopsis thaliana (Mouse-ear cress).